The sequence spans 1699 residues: Cilia- and flagella-associated protein 61 (1699 aa).

Over residues 1 to 22 (MYSNNQLDNPNHSRSQYRNGDQ) the composition is skewed to polar residues. 3 disordered regions span residues 1-23 (MYSN…GDQS), 489-515 (QLKR…DEFK), and 1340-1365 (ERDA…EENQ). The segment covering 489-503 (QLKRPQKKVTKRPKR) has biased composition (basic residues). 2 stretches are compositionally biased toward basic and acidic residues: residues 504–515 (QKEEDKKEDEFK) and 1340–1359 (ERDA…QSRD).

The protein localises to the cell projection. Its subcellular location is the cilium. Functionally, as component of a spoke-associated complex, regulates ciliary mobility by mediating a stable and functional assembly of the radial spoke 3 (RS3). The protein is Cilia- and flagella-associated protein 61 of Tetrahymena thermophila (strain SB210).